A 152-amino-acid polypeptide reads, in one-letter code: ALK and LTK ligand 1 (152 aa).

The first 23 residues, 1–23 (MRAEKRWHILLSMILLLITSSQC), serve as a signal peptide directing secretion. 2 disulfides stabilise this stretch: cysteine 113–cysteine 149 and cysteine 127–cysteine 136.

Belongs to the ALKAL family. In terms of tissue distribution, expressed at low level in the notochord and iridophore stripes, the eye and the swim bladder.

It localises to the secreted. Its subcellular location is the cell membrane. Functionally, cytokine that acts as a physiological ligand for receptor tyrosine kinases LTK and ALK. Required for iridophore development in the adult eye by acting as a receptor for LTK. The protein is ALK and LTK ligand 1 of Danio rerio (Zebrafish).